The sequence spans 1997 residues: Otoferlin (1997 aa).

The 98-residue stretch at 1–98 folds into the C2 1 domain; the sequence is MALLIHLKTV…VEESHVEVTD (98 aa). Over 1–1963 the chain is Cytoplasmic; that stretch reads MALLIHLKTV…ARYFLWHTYR (1963 aa). The tract at residues 128–171 is disordered; it reads WDDGDFLGDESLQEEEKDSQETDGLLPGSRPSSRPPGEKSFRRA. The segment covering 129-145 has biased composition (acidic residues); that stretch reads DDGDFLGDESLQEEEKD. 2 C2 domains span residues 236–357 and 400–531; these read KRSK…HKWA and IEGN…FLPT. A disordered region spans residues 642-694; the sequence is NEVDGLSRPQRPRPRKEPGDEEEVDLIQNASDDEAGDAGDLASVSSTPPMRPQ. Residues 660–678 are compositionally biased toward acidic residues; it reads GDEEEVDLIQNASDDEAGD. The stretch at 792 to 821 forms a coiled coil; that stretch reads RERLKSCMRELENMGQQARMLRAQVKRHTV. C2 domains are found at residues 944 to 1069 and 1115 to 1242; these read LHAF…PPRF and DRGP…PSWN. Residues Asp976, Asp982, Asp1038, Asp1040, and Asp1046 each coordinate Ca(2+). Disordered regions lie at residues 1299-1324 and 1343-1405; these read AEEEKEKKKKKKGTAEEPEEEEPDES and LRQQ…KPKI. Acidic residues-rich tracts occupy residues 1314–1324 and 1352–1361; these read EEPEEEEPDES and DLEEKEEVDN. The span at 1370–1383 shows a compositional bias: basic and acidic residues; sequence KGKEKARAAKEEKK. Residues 1387 to 1396 show a composition bias toward low complexity; that stretch reads QSSGSGQGSE. C2 domains follow at residues 1464-1593 and 1714-1865; these read LPED…ATCG and DMPA…KQCT. Ca(2+)-binding residues include Asp1508, Asp1514, Asp1563, Asp1565, Asp1571, Asp1836, Ser1839, and Asp1842. Residues 1964–1984 traverse the membrane as a helical segment; sequence WLLLKLLLLLLLLLLLALFLY. Topologically, residues 1985–1997 are extracellular; it reads SVPGYLVKKILGA.

This sequence belongs to the ferlin family. As to quaternary structure, interacts with SNAP2; the interaction is direct. Interacts with STX1; the interaction is direct. Interacts with RAB8B. It depends on Ca(2+) as a cofactor. In terms of tissue distribution, isoform 1 and isoform 3 are found in adult brain. Isoform 2 is expressed in the fetus and in adult brain, heart, placenta, skeletal muscle and kidney.

It localises to the cytoplasmic vesicle. The protein localises to the secretory vesicle. It is found in the synaptic vesicle membrane. The protein resides in the basolateral cell membrane. Its subcellular location is the endoplasmic reticulum membrane. It localises to the golgi apparatus membrane. The protein localises to the presynaptic cell membrane. It is found in the cell membrane. In terms of biological role, key calcium ion sensor involved in the Ca(2+)-triggered synaptic vesicle-plasma membrane fusion and in the control of neurotransmitter release at these output synapses. Interacts in a calcium-dependent manner to the presynaptic SNARE proteins at ribbon synapses of cochlear inner hair cells (IHCs) to trigger exocytosis of neurotransmitter. Also essential to synaptic exocytosis in immature outer hair cells (OHCs). May also play a role within the recycling of endosomes. This is Otoferlin (OTOF) from Homo sapiens (Human).